The chain runs to 21 residues: Nigrocin-2JDa (21 aa).

A disulfide bridge links Cys-15 with Cys-21.

Expressed by the skin glands.

The protein localises to the secreted. Has antibacterial activity against E.coli ATCC 25992 (MIC=16 uM), E.coli CIB 84492 (MIC=16 uM), S.aureus ATCC 25923 (MIC=16 uM) and S.aureus CIB 85462 (MIC=8 uM). Has antifungal activity against C.albicans (MIC=63 uM). Has hemolytic activity against rabbit erythrocytes. The polypeptide is Nigrocin-2JDa (Odorrana jingdongensis (Jingdong frog)).